The following is a 208-amino-acid chain: Outer-membrane lipoprotein carrier protein (208 aa).

The first 21 residues, 1 to 21, serve as a signal peptide directing secretion; the sequence is MRLIRTLFVAALAMGTSLAHA.

This sequence belongs to the LolA family. Monomer.

The protein localises to the periplasm. Participates in the translocation of lipoproteins from the inner membrane to the outer membrane. Only forms a complex with a lipoprotein if the residue after the N-terminal Cys is not an aspartate (The Asp acts as a targeting signal to indicate that the lipoprotein should stay in the inner membrane). This is Outer-membrane lipoprotein carrier protein from Pseudomonas paraeruginosa (strain DSM 24068 / PA7) (Pseudomonas aeruginosa (strain PA7)).